We begin with the raw amino-acid sequence, 440 residues long: Cell division protein FtsA (440 aa).

Positions 396 to 440 (VSSSEEQEQHHHQNEVQQRPKGKQKTQAEHNKQSKMKKLLSMFWE) are disordered.

The protein belongs to the FtsA/MreB family. Homodimer. Interacts with FtsZ.

Its subcellular location is the cell membrane. Functionally, cell division protein that is required for the assembly of the Z ring. May serve as a membrane anchor for the Z ring. Binds and hydrolyzes ATP. Also involved in sporulation. The protein is Cell division protein FtsA of Bacillus subtilis (strain 168).